A 415-amino-acid polypeptide reads, in one-letter code: Small ribosomal subunit protein uS5m (415 aa).

Residues 1-31 (MRRSGPELWKTLTSVSKSGQKKGRRNTRQPV) form a disordered region. Positions 131-197 (FETYCLEVKR…GMASRKIFHV (67 aa)) constitute an S5 DRBM domain. The disordered stretch occupies residues 396–415 (GVEPMPLGIGLSHVVPKKDD).

The protein belongs to the universal ribosomal protein uS5 family. In terms of assembly, component of the mitochondrial ribosome small subunit (28S) which comprises a 12S rRNA and about 30 distinct proteins.

It localises to the mitochondrion. In Caenorhabditis briggsae, this protein is Small ribosomal subunit protein uS5m (mrps-5).